The sequence spans 249 residues: Secretion system apparatus lipoprotein SsaJ (249 aa).

Positions 1 to 18 (MKVHRIVFLTVLTFFLTA) are cleaved as a signal peptide. The N-palmitoyl cysteine moiety is linked to residue C19. C19 is lipidated: S-diacylglycerol cysteine. Residues 225 to 245 (LMLSLTGLLLGVGILIGYFCL) form a helical membrane-spanning segment.

Belongs to the YscJ lipoprotein family.

The protein localises to the cell outer membrane. In terms of biological role, component of Salmonella pathogenicity island 2 (SPI-2) type III secretion system, required for secretion of some type III-secreted effectors including the SpvB exotoxin. The sequence is that of Secretion system apparatus lipoprotein SsaJ (ssaJ) from Salmonella typhimurium (strain 14028s / SGSC 2262).